A 169-amino-acid polypeptide reads, in one-letter code: Ubiquitin-fold modifier-conjugating enzyme 1 (169 aa).

The active-site Glycyl thioester intermediate is the Cys-116.

It belongs to the ubiquitin-conjugating enzyme family. UFC1 subfamily.

Functionally, E2-like enzyme which forms an intermediate with UFM1 via a thioester linkage. In Branchiostoma floridae (Florida lancelet), this protein is Ubiquitin-fold modifier-conjugating enzyme 1.